We begin with the raw amino-acid sequence, 76 residues long: Antimicrobial peptide lumbricin-1 (76 aa).

A propeptide spans 1 to 14 (removed in mature form); the sequence is MSLCISDYLYLTLT.

In terms of biological role, displays antimicrobial activity against the Gram-positive bacteria B.subtilis ATCC 62037, S.aureus ATCC 15752 and S.mutans ATCC 25175, the Gram-negative bacteria E.coli ATCC 27325, P.putida ATCC 17426 and Serratia sp. ATCC 21074, and the fungi C.albicans ATCC 10231, C.neoformans ATCC 34881 and S.cerevisiae ATCC 44774. Does not possess hemolytic activity. In Lumbricus rubellus (Humus earthworm), this protein is Antimicrobial peptide lumbricin-1.